The primary structure comprises 279 residues: 1-(5-phosphoribosyl)-5-[(5-phosphoribosylamino)methylideneamino] imidazole-4-carboxamide isomerase (279 aa).

Belongs to the HisA/HisF family.

Its subcellular location is the cytoplasm. The enzyme catalyses 1-(5-phospho-beta-D-ribosyl)-5-[(5-phospho-beta-D-ribosylamino)methylideneamino]imidazole-4-carboxamide = 5-[(5-phospho-1-deoxy-D-ribulos-1-ylimino)methylamino]-1-(5-phospho-beta-D-ribosyl)imidazole-4-carboxamide. It functions in the pathway amino-acid biosynthesis; L-histidine biosynthesis; L-histidine from 5-phospho-alpha-D-ribose 1-diphosphate: step 4/9. This Candida albicans (Yeast) protein is 1-(5-phosphoribosyl)-5-[(5-phosphoribosylamino)methylideneamino] imidazole-4-carboxamide isomerase (HIS6).